We begin with the raw amino-acid sequence, 150 residues long: MPIVDSGSVSPLSDAEKNKIRAAWDIVYKNYEKNGVDILVKFFTGTPAAQAFFPKFKGLTTADALKKSSDVRWHAERIINAVNDAVKSMDDTEKMSMKLQELSVKHAQSFYVDRQYFKVLAGIIADTTAPGDAGFEKLMSMICILLSSAY.

The region spanning 11-150 (PLSDAEKNKI…MICILLSSAY (140 aa)) is the Globin domain. Residues His74 and His106 each contribute to the heme b site.

The protein belongs to the globin family. In terms of assembly, monomer.

The polypeptide is Globin-2 (Mordacia mordax (Southern hemisphere lamprey)).